A 1610-amino-acid chain; its full sequence is NHS-like protein 1 (1610 aa).

Phosphoserine is present on serine 24. The tract at residues 145–169 is disordered; sequence SPFCDDYQDEDEETDQKCSLSSSEE. Residues serine 198 and serine 328 each carry the phosphoserine modification. Residues 433–448 are compositionally biased toward polar residues; the sequence is TAQSAGQRESKSSGSS. Disordered stretches follow at residues 433–477 and 531–602; these read TAQS…HWNE and PAHP…DAGS. Serine 568 carries the post-translational modification Phosphoserine. Residues 578-594 show a composition bias toward polar residues; the sequence is GYSTPTSNMSSCSLDQT. A Phosphoserine modification is found at serine 639. Polar residues predominate over residues 649–667; sequence QKNQGDRSNYQDKSLSRNI. Disordered stretches follow at residues 649–693, 715–778, 791–981, 997–1535, and 1566–1610; these read QKNQ…KKSS, SLPG…SVKS, TGMQ…PPPE, PRPA…GEGE, and EGGL…SEES. The segment covering 715 to 730 has biased composition (low complexity); it reads SLPGKSGSSPSQSPCS. Composition is skewed to polar residues over residues 740 to 760, 767 to 778, and 851 to 865; these read SRSQ…TPNV, TPSQSDTSSVKS, and SPSS…TPTA. A compositionally biased stretch (low complexity) spans 895–928; sequence SLISSVSISSSSTSLSSSTSTEGSGTMKKLDPAV. Composition is skewed to pro residues over residues 929–946 and 970–981; these read GSPP…PFPC and PHSPVFPPPPPE. A compositionally biased stretch (low complexity) spans 1001–1011; the sequence is LSPILPDSPVS. Over residues 1012–1031 the composition is skewed to pro residues; sequence LPLPPPLLPSSEPPPAPPLD. A compositionally biased stretch (polar residues) spans 1041-1053; sequence PFTNSGQPESSRG. At serine 1089 the chain carries Phosphoserine. The span at 1122–1153 shows a compositional bias: polar residues; sequence SRNSTNEMESESQPASVTSSLPTPAKSSSQGD. Serine 1167 is subject to Phosphoserine. Low complexity predominate over residues 1180–1193; it reads PSPSTTPLPDSSPS. Serine 1233 is subject to Phosphoserine. Composition is skewed to basic and acidic residues over residues 1240 to 1249 and 1373 to 1383; these read GSVHSREAKE and GRRDSDDDHSR. Phosphoserine occurs at positions 1386 and 1388. Phosphothreonine is present on threonine 1392. The segment covering 1405 to 1422 has biased composition (polar residues); it reads QVGSIQRSIRKSSTSSDN. Over residues 1447-1460 the composition is skewed to basic and acidic residues; it reads KNTDPRFQRSRSEP. Low complexity-rich tracts occupy residues 1461–1474 and 1504–1516; these read SPDA…CSPS and SRTP…SRYS.

The protein belongs to the NHS family. As to expression, widely expressed. Expressed in adult and fetal brain, fetal eyes, adult lens, kidney, liver and intestine.

In Homo sapiens (Human), this protein is NHS-like protein 1 (NHSL1).